A 270-amino-acid chain; its full sequence is Glutamate 5-kinase (270 aa).

K18 lines the ATP pocket. 3 residues coordinate substrate: S54, D141, and N153. S173–D174 lines the ATP pocket.

Belongs to the glutamate 5-kinase family.

It localises to the cytoplasm. It catalyses the reaction L-glutamate + ATP = L-glutamyl 5-phosphate + ADP. It participates in amino-acid biosynthesis; L-proline biosynthesis; L-glutamate 5-semialdehyde from L-glutamate: step 1/2. In terms of biological role, catalyzes the transfer of a phosphate group to glutamate to form L-glutamate 5-phosphate. The polypeptide is Glutamate 5-kinase (Leifsonia xyli subsp. xyli (strain CTCB07)).